The chain runs to 201 residues: Holliday junction branch migration complex subunit RuvA (201 aa).

Residues 1–64 (MIGRLRGTLA…EDAQLLYGFA (64 aa)) form a domain I region. The tract at residues 65-143 (EKRERELFRE…AWESMPAIAT (79 aa)) is domain II. Residues 144–152 (LVVEPGSKT) form a flexible linker region. Positions 153–201 (AVTSAENDAVSALISLGFKPQEASRAVSAIQEENLSSEEMIRRALKGMV) are domain III.

The protein belongs to the RuvA family. Homotetramer. Forms an RuvA(8)-RuvB(12)-Holliday junction (HJ) complex. HJ DNA is sandwiched between 2 RuvA tetramers; dsDNA enters through RuvA and exits via RuvB. An RuvB hexamer assembles on each DNA strand where it exits the tetramer. Each RuvB hexamer is contacted by two RuvA subunits (via domain III) on 2 adjacent RuvB subunits; this complex drives branch migration. In the full resolvosome a probable DNA-RuvA(4)-RuvB(12)-RuvC(2) complex forms which resolves the HJ.

The protein resides in the cytoplasm. Its function is as follows. The RuvA-RuvB-RuvC complex processes Holliday junction (HJ) DNA during genetic recombination and DNA repair, while the RuvA-RuvB complex plays an important role in the rescue of blocked DNA replication forks via replication fork reversal (RFR). RuvA specifically binds to HJ cruciform DNA, conferring on it an open structure. The RuvB hexamer acts as an ATP-dependent pump, pulling dsDNA into and through the RuvAB complex. HJ branch migration allows RuvC to scan DNA until it finds its consensus sequence, where it cleaves and resolves the cruciform DNA. The sequence is that of Holliday junction branch migration complex subunit RuvA from Stutzerimonas stutzeri (strain A1501) (Pseudomonas stutzeri).